A 579-amino-acid polypeptide reads, in one-letter code: A-type ATP synthase subunit A (579 aa).

Residue 229 to 236 (GPFGSGKT) coordinates ATP.

The protein belongs to the ATPase alpha/beta chains family. Has multiple subunits with at least A(3), B(3), C, D, E, F, H, I and proteolipid K(x).

It localises to the cell membrane. The enzyme catalyses ATP + H2O + 4 H(+)(in) = ADP + phosphate + 5 H(+)(out). Component of the A-type ATP synthase that produces ATP from ADP in the presence of a proton gradient across the membrane. The A chain is the catalytic subunit. This chain is A-type ATP synthase subunit A, found in Methanocella arvoryzae (strain DSM 22066 / NBRC 105507 / MRE50).